A 430-amino-acid polypeptide reads, in one-letter code: Asparagine--tRNA ligase (430 aa).

Belongs to the class-II aminoacyl-tRNA synthetase family. Homodimer.

It localises to the cytoplasm. It carries out the reaction tRNA(Asn) + L-asparagine + ATP = L-asparaginyl-tRNA(Asn) + AMP + diphosphate + H(+). The sequence is that of Asparagine--tRNA ligase from Staphylococcus aureus (strain MRSA252).